The sequence spans 333 residues: N-acetyl-gamma-glutamyl-phosphate reductase (333 aa).

Residue cysteine 136 is part of the active site.

This sequence belongs to the NAGSA dehydrogenase family. Type 1 subfamily.

Its subcellular location is the cytoplasm. The enzyme catalyses N-acetyl-L-glutamate 5-semialdehyde + phosphate + NADP(+) = N-acetyl-L-glutamyl 5-phosphate + NADPH + H(+). The protein operates within amino-acid biosynthesis; L-arginine biosynthesis; N(2)-acetyl-L-ornithine from L-glutamate: step 3/4. Its function is as follows. Catalyzes the NADPH-dependent reduction of N-acetyl-5-glutamyl phosphate to yield N-acetyl-L-glutamate 5-semialdehyde. The protein is N-acetyl-gamma-glutamyl-phosphate reductase of Xylella fastidiosa (strain 9a5c).